We begin with the raw amino-acid sequence, 232 residues long: GFP-like fluorescent chromoprotein dsFP483 (232 aa).

Residues 66–68 (QYG) constitute a cross-link (2-iminomethyl-5-imidazolinone (Gln-Gly)). Position 67 is a 2,3-didehydrotyrosine (Tyr-67).

The protein belongs to the GFP family. Contains a chromophore consisting of modified amino acid residues. The chromophore is formed by autocatalytic backbone condensation between Xaa-N and Gly-(N+2), oxidation of Tyr-(N+1) to didehydrotyrosine, and formation of a double bond to the alpha-amino nitrogen of residue Xaa-N. Maturation of the chromophore requires nothing other than molecular oxygen. The precise stereochemistry of the tyrosine has not been determined. As to expression, oral disk.

Pigment protein that is green in color. This chain is GFP-like fluorescent chromoprotein dsFP483, found in Discosoma striata (Striped mushroom).